The chain runs to 81 residues: GAMMA-ctenitoxin-Pn1a (81 aa).

Positions 1-16 (MKVAIVFLSLLVLAFA) are cleaved as a signal peptide. A propeptide spanning residues 17–34 (SESIEENREEFPVEESAR) is cleaved from the precursor. Intrachain disulfides connect Cys35–Cys49, Cys42–Cys55, Cys46–Cys81, Cys48–Cys65, and Cys57–Cys63.

It belongs to the neurotoxin 03 (Tx2) family. 05 subfamily. Expressed by the venom gland.

The protein localises to the secreted. Its function is as follows. This insecticidal neurotoxin targets two types of channels/receptors. It reversibly inhibits the N-methyl-D-aspartate (NMDA)-subtype of ionotropic glutamate receptor (GRIN). It inhibits glutamate uptake from rat brain synaptosomes, and blocks GRIN in hippocampal slices. It also acts on sodium channels of both insects and mammals. On sodium channel insects, it strongly slows down channel inactivation (EC(50)=212.5 nM) and causes an increase (105%) in peak amplitude (at 1 uM) of B.germanica sodium channel (Nav), whereas it inhibits all mammalien sodium channels tested with the following order of potency: Nav1.3/SCN3A (IC(50)=1.5 uM) &gt; Nav1.6/SCN8A &gt; Nav1.5/SCN5A &gt; Nav1.4/SCN4A &gt;= Nav1.2/SCN2A. In vivo, it is highly toxic to house fly (Musca domestica), cockroach (Periplaneta americana), and cricket (Acheta domesticus). In different rat pain models (induced by PGE2, carrageenan or glutamate), it shows antinociceptive effect that may be related to an inhibitory activity on the glutamatergic system. This chain is GAMMA-ctenitoxin-Pn1a, found in Phoneutria nigriventer (Brazilian armed spider).